Consider the following 242-residue polypeptide: DNA repair protein RecO (242 aa).

Belongs to the RecO family.

Involved in DNA repair and RecF pathway recombination. In Laribacter hongkongensis (strain HLHK9), this protein is DNA repair protein RecO.